Consider the following 527-residue polypeptide: Probable bifunctional methylthioribulose-1-phosphate dehydratase/enolase-phosphatase E1 (527 aa).

The interval 1-244 (MAAAAAPAVA…AIKLHQLGLD (244 aa)) is methylthioribulose-1-phosphate dehydratase. Cys116 is a binding site for substrate. Zn(2+)-binding residues include His134 and His136. Glu159 (proton donor/acceptor; for methylthioribulose-1-phosphate dehydratase activity) is an active-site residue. Position 209 (His209) interacts with Zn(2+). The enolase-phosphatase E1 stretch occupies residues 288 to 527 (IVLDIEGTTT…FKTINSLSEI (240 aa)). Mg(2+)-binding residues include Asp291 and Glu293. Substrate contacts are provided by residues 426-427 (SS) and Lys460. Asp486 contributes to the Mg(2+) binding site.

It in the N-terminal section; belongs to the aldolase class II family. MtnB subfamily. In the C-terminal section; belongs to the HAD-like hydrolase superfamily. MasA/MtnC family. Zn(2+) is required as a cofactor. Requires Mg(2+) as cofactor.

The catalysed reaction is 5-(methylsulfanyl)-D-ribulose 1-phosphate = 5-methylsulfanyl-2,3-dioxopentyl phosphate + H2O. It carries out the reaction 5-methylsulfanyl-2,3-dioxopentyl phosphate + H2O = 1,2-dihydroxy-5-(methylsulfanyl)pent-1-en-3-one + phosphate. Its pathway is amino-acid biosynthesis; L-methionine biosynthesis via salvage pathway; L-methionine from S-methyl-5-thio-alpha-D-ribose 1-phosphate: step 2/6. It functions in the pathway amino-acid biosynthesis; L-methionine biosynthesis via salvage pathway; L-methionine from S-methyl-5-thio-alpha-D-ribose 1-phosphate: step 3/6. The protein operates within amino-acid biosynthesis; L-methionine biosynthesis via salvage pathway; L-methionine from S-methyl-5-thio-alpha-D-ribose 1-phosphate: step 4/6. This is Probable bifunctional methylthioribulose-1-phosphate dehydratase/enolase-phosphatase E1 from Ricinus communis (Castor bean).